The sequence spans 807 residues: Glycerol-3-phosphate acyltransferase (807 aa).

Positions 308 to 313 match the HXXXXD motif motif; sequence CHRSHM.

The protein belongs to the GPAT/DAPAT family.

It is found in the cell inner membrane. It carries out the reaction sn-glycerol 3-phosphate + an acyl-CoA = a 1-acyl-sn-glycero-3-phosphate + CoA. It participates in phospholipid metabolism; CDP-diacylglycerol biosynthesis; CDP-diacylglycerol from sn-glycerol 3-phosphate: step 1/3. This is Glycerol-3-phosphate acyltransferase from Shewanella frigidimarina (strain NCIMB 400).